A 117-amino-acid polypeptide reads, in one-letter code: Cysteine rich necrotrophic effector Tox1 (117 aa).

An N-terminal signal peptide occupies residues 1–17; the sequence is MKLTMVLSVAFATLTFA. Cystine bridges form between C36–C87, C44–C55, C53–C58, C54–C98, C63–C83, C67–C117, C86–C97, and C107–C110. Residues 87 to 117 are chitin-binding domain; it reads CNAGGESHELCCSIASAGIDCNPCTAGLRMC.

Interacts with host cell wall-associated kinase receptor Snn1.

It is found in the secreted. Functionally, necrotrophic effector that plays a critical role during fungal penetration, via its interaction with the host Snn1 protein. Snn1 is a member of the wall-associated kinase class of receptors, which are known to drive pathways for biotrophic pathogen resistance. Recognition of Tox1 by Snn1 induces mitogen-activated protein kinase genes such as MAPK3 and activates programmed cell death, which allows this necrotroph to gain nutrients and sporulate. Recognition of Tox1 by Snn1 also induces other plant defense responses, including oxidative burst and pathogenesis related (PR) gene expression. The development of necrosis and disease induced by Tox1, and particularly penetration during infection, requires light, which is probably related to the light-dependent expression of host Snn1. Tox1 plays an additional role in providing significant protection from wheat chitinases by binding chitin in the fungal cell wall. This Phaeosphaeria nodorum (strain SN15 / ATCC MYA-4574 / FGSC 10173) (Glume blotch fungus) protein is Cysteine rich necrotrophic effector Tox1.